Consider the following 364-residue polypeptide: Chorismate synthase (364 aa).

Arg48 lines the NADP(+) pocket. FMN is bound by residues 131-133 (RSS), 243-244 (NA), Gly288, 303-307 (KPTSS), and Arg329.

It belongs to the chorismate synthase family. As to quaternary structure, homotetramer. FMNH2 is required as a cofactor.

The enzyme catalyses 5-O-(1-carboxyvinyl)-3-phosphoshikimate = chorismate + phosphate. It participates in metabolic intermediate biosynthesis; chorismate biosynthesis; chorismate from D-erythrose 4-phosphate and phosphoenolpyruvate: step 7/7. Functionally, catalyzes the anti-1,4-elimination of the C-3 phosphate and the C-6 proR hydrogen from 5-enolpyruvylshikimate-3-phosphate (EPSP) to yield chorismate, which is the branch point compound that serves as the starting substrate for the three terminal pathways of aromatic amino acid biosynthesis. This reaction introduces a second double bond into the aromatic ring system. This Brucella melitensis biotype 2 (strain ATCC 23457) protein is Chorismate synthase.